Here is a 210-residue protein sequence, read N- to C-terminus: Large ribosomal subunit protein uL4 (210 aa).

The span at 41–52 (QTNARQGTASTK) shows a compositional bias: polar residues. The interval 41–71 (QTNARQGTASTKTRAEVRGGGRKPWRQKGTG) is disordered. Positions 60–71 (GGRKPWRQKGTG) are enriched in basic residues.

The protein belongs to the universal ribosomal protein uL4 family. In terms of assembly, part of the 50S ribosomal subunit.

In terms of biological role, one of the primary rRNA binding proteins, this protein initially binds near the 5'-end of the 23S rRNA. It is important during the early stages of 50S assembly. It makes multiple contacts with different domains of the 23S rRNA in the assembled 50S subunit and ribosome. Forms part of the polypeptide exit tunnel. The sequence is that of Large ribosomal subunit protein uL4 from Nostoc sp. (strain PCC 7120 / SAG 25.82 / UTEX 2576).